The sequence spans 430 residues: Adenylosuccinate synthetase (430 aa).

Residues 13-19 and 41-43 each bind GTP; these read GDEGKGK and GHT. Asp-14 functions as the Proton acceptor in the catalytic mechanism. The Mg(2+) site is built by Asp-14 and Gly-41. IMP contacts are provided by residues 14–17, 39–42, Thr-130, Arg-144, Gln-225, Thr-240, and Arg-304; these read DEGK and NAGH. The active-site Proton donor is the His-42. 300-306 lines the substrate pocket; that stretch reads STTGRKR. Residues Arg-306, 332 to 334, and 414 to 416 each bind GTP; these read KLD and STG.

It belongs to the adenylosuccinate synthetase family. In terms of assembly, homodimer. Mg(2+) is required as a cofactor.

It localises to the cytoplasm. It catalyses the reaction IMP + L-aspartate + GTP = N(6)-(1,2-dicarboxyethyl)-AMP + GDP + phosphate + 2 H(+). The protein operates within purine metabolism; AMP biosynthesis via de novo pathway; AMP from IMP: step 1/2. Plays an important role in the de novo pathway of purine nucleotide biosynthesis. Catalyzes the first committed step in the biosynthesis of AMP from IMP. This is Adenylosuccinate synthetase from Buchnera aphidicola subsp. Schizaphis graminum (strain Sg).